Consider the following 773-residue polypeptide: Phenylalanine--tRNA ligase beta subunit (773 aa).

The tRNA-binding domain occupies 39-150; the sequence is LKAPDKVVVG…GKLELGRPLN (112 aa). The 77-residue stretch at 391–467 folds into the B5 domain; sequence KELPIIPISI…RIIGIDNIAS (77 aa). Mg(2+) is bound by residues Asp-445, Asp-451, Glu-454, and Glu-455. Positions 682–773 constitute an FDX-ACB domain; sequence SKFPAITRDL…TLKNLGLDLR (92 aa).

It belongs to the phenylalanyl-tRNA synthetase beta subunit family. Type 1 subfamily. In terms of assembly, tetramer of two alpha and two beta subunits. The cofactor is Mg(2+).

The protein localises to the cytoplasm. The catalysed reaction is tRNA(Phe) + L-phenylalanine + ATP = L-phenylalanyl-tRNA(Phe) + AMP + diphosphate + H(+). The sequence is that of Phenylalanine--tRNA ligase beta subunit from Campylobacter jejuni (strain RM1221).